Reading from the N-terminus, the 248-residue chain is Aspartate/glutamate leucyltransferase (248 aa).

This sequence belongs to the R-transferase family. Bpt subfamily.

Its subcellular location is the cytoplasm. It carries out the reaction N-terminal L-glutamyl-[protein] + L-leucyl-tRNA(Leu) = N-terminal L-leucyl-L-glutamyl-[protein] + tRNA(Leu) + H(+). The catalysed reaction is N-terminal L-aspartyl-[protein] + L-leucyl-tRNA(Leu) = N-terminal L-leucyl-L-aspartyl-[protein] + tRNA(Leu) + H(+). Functions in the N-end rule pathway of protein degradation where it conjugates Leu from its aminoacyl-tRNA to the N-termini of proteins containing an N-terminal aspartate or glutamate. The sequence is that of Aspartate/glutamate leucyltransferase from Methylobacillus flagellatus (strain ATCC 51484 / DSM 6875 / VKM B-1610 / KT).